A 545-amino-acid polypeptide reads, in one-letter code: ATP synthase subunit alpha (545 aa).

G173 to T180 contributes to the ATP binding site.

The protein belongs to the ATPase alpha/beta chains family. As to quaternary structure, F-type ATPases have 2 components, CF(1) - the catalytic core - and CF(0) - the membrane proton channel. CF(1) has five subunits: alpha(3), beta(3), gamma(1), delta(1), epsilon(1). CF(0) has three main subunits: a(1), b(2) and c(9-12). The alpha and beta chains form an alternating ring which encloses part of the gamma chain. CF(1) is attached to CF(0) by a central stalk formed by the gamma and epsilon chains, while a peripheral stalk is formed by the delta and b chains.

The protein localises to the cell membrane. It catalyses the reaction ATP + H2O + 4 H(+)(in) = ADP + phosphate + 5 H(+)(out). Its function is as follows. Produces ATP from ADP in the presence of a proton gradient across the membrane. The alpha chain is a regulatory subunit. In Leifsonia xyli subsp. xyli (strain CTCB07), this protein is ATP synthase subunit alpha.